The chain runs to 58 residues: Metallothionein (58 aa).

Residues 1–29 (MPGPCCNDVCECAAGGCKTGCVCTSCRCS) form a beta region. Cys5, Cys6, Cys10, Cys12, Cys17, Cys21, Cys23, Cys26, Cys28, Cys31, Cys34, Cys38, Cys40, Cys46, Cys50, Cys54, Cys56, and Cys57 together coordinate a divalent metal cation. The interval 30-58 (PCDKCTSGCKCPSKEECAKTCSKPCECCP) is alpha.

In terms of biological role, metallothioneins have a high content of cysteine residues that bind various heavy metals. Class I MTS in crustacea are involved in the sequestration of elevated levels of heavy-metal ions. The polypeptide is Metallothionein (Astacus astacus (Noble crayfish)).